A 535-amino-acid polypeptide reads, in one-letter code: Protein translocase subunit SecD (535 aa).

A run of 6 helical transmembrane segments spans residues 5 to 25 (LTWK…GIIG), 377 to 397 (AIIG…GAGI), 402 to 421 (SLLL…GAVL), 425 to 444 (GIAG…VLIF), 469 to 489 (WLTI…LFLF), and 496 to 516 (GFAV…VFVS).

The protein belongs to the SecD/SecF family. SecD subfamily. Forms a complex with SecF. Part of the essential Sec protein translocation apparatus which comprises SecA, SecYEG and auxiliary proteins SecDF. Other proteins may also be involved.

Its subcellular location is the cell inner membrane. Functionally, part of the Sec protein translocase complex. Interacts with the SecYEG preprotein conducting channel. SecDF uses the proton motive force (PMF) to complete protein translocation after the ATP-dependent function of SecA. This chain is Protein translocase subunit SecD, found in Koribacter versatilis (strain Ellin345).